The chain runs to 529 residues: Isoleucine--tRNA ligase (529 aa).

Glu482 serves as a coordination point for L-isoleucyl-5'-AMP. The 'KMSKS' region motif lies at 523–527 (KMSKS). Lys526 contacts ATP.

Belongs to the class-I aminoacyl-tRNA synthetase family. IleS type 1 subfamily. Monomer.

The protein resides in the cytoplasm. It carries out the reaction tRNA(Ile) + L-isoleucine + ATP = L-isoleucyl-tRNA(Ile) + AMP + diphosphate. Catalyzes the attachment of isoleucine to tRNA(Ile). As IleRS can inadvertently accommodate and process structurally similar amino acids such as valine, to avoid such errors it has two additional distinct tRNA(Ile)-dependent editing activities. One activity is designated as 'pretransfer' editing and involves the hydrolysis of activated Val-AMP. The other activity is designated 'posttransfer' editing and involves deacylation of mischarged Val-tRNA(Ile). In Aquifex pyrophilus, this protein is Isoleucine--tRNA ligase (ileS).